The sequence spans 28 residues: M-poneritoxin-Dq4a (28 aa).

Ala28 carries the alanine amide modification.

Expressed by the venom gland.

It localises to the secreted. Functionally, the synthetic peptide has weak antimicrobial activity against Gram-negative bacterium E.coli ATCC 10536. It does not show antimicrobial activity against the Gram-positive bacteria B.amyloliquefacies S499, L.monocytogenes 2231 and S.aureus ATCC 29213, against the Gram-negative bacteria P.putida BTP1 and P.aeruginosa PaO1, or against the fungi S.cerevisiae, R.mucilaginosa, C.cucumerinum, F.oxysporum and B.cinerea. The sequence is that of M-poneritoxin-Dq4a from Dinoponera quadriceps (South American ant).